The chain runs to 474 residues: L-arabinose isomerase (474 aa).

Glu-306, Glu-331, His-348, and His-447 together coordinate Mn(2+).

This sequence belongs to the arabinose isomerase family. Requires Mn(2+) as cofactor.

The enzyme catalyses beta-L-arabinopyranose = L-ribulose. It functions in the pathway carbohydrate degradation; L-arabinose degradation via L-ribulose; D-xylulose 5-phosphate from L-arabinose (bacterial route): step 1/3. Catalyzes the conversion of L-arabinose to L-ribulose. This is L-arabinose isomerase from Oceanobacillus iheyensis (strain DSM 14371 / CIP 107618 / JCM 11309 / KCTC 3954 / HTE831).